Consider the following 263-residue polypeptide: Receptor expression-enhancing protein 3-A (263 aa).

A run of 2 helical transmembrane segments spans residues 2 to 22 (VSWI…PAYF) and 35 to 55 (YVRW…EAIA). 2 disordered regions span residues 161–228 (GDET…SMRS) and 240–263 (YASL…AHHL). The segment covering 199-214 (DDNTDEDVEVNSEDEV) has biased composition (acidic residues). Residues 242–251 (SLKHKPKKRP) show a composition bias toward basic residues.

Belongs to the DP1 family.

Its subcellular location is the endoplasmic reticulum membrane. Functionally, microtubule-binding protein required to ensure proper cell division and nuclear envelope reassembly by sequestering the endoplasmic reticulum away from chromosomes during mitosis. Probably acts by clearing the endoplasmic reticulum membrane from metaphase chromosomes. The sequence is that of Receptor expression-enhancing protein 3-A (reep3-a) from Xenopus laevis (African clawed frog).